Reading from the N-terminus, the 464-residue chain is ATP synthase subunit beta (464 aa).

153 to 160 is an ATP binding site; it reads GGAGVGKT.

It belongs to the ATPase alpha/beta chains family. In terms of assembly, F-type ATPases have 2 components, CF(1) - the catalytic core - and CF(0) - the membrane proton channel. CF(1) has five subunits: alpha(3), beta(3), gamma(1), delta(1), epsilon(1). CF(0) has three main subunits: a(1), b(2) and c(9-12). The alpha and beta chains form an alternating ring which encloses part of the gamma chain. CF(1) is attached to CF(0) by a central stalk formed by the gamma and epsilon chains, while a peripheral stalk is formed by the delta and b chains.

The protein resides in the cell membrane. The enzyme catalyses ATP + H2O + 4 H(+)(in) = ADP + phosphate + 5 H(+)(out). Produces ATP from ADP in the presence of a proton gradient across the membrane. The catalytic sites are hosted primarily by the beta subunits. The polypeptide is ATP synthase subunit beta (Clostridium novyi (strain NT)).